The primary structure comprises 731 residues: Two pore channel protein 2 (731 aa).

The Cytoplasmic segment spans residues 1 to 68 (MAAEEQPLLG…RWYYSNVCQR (68 aa)). The chain crosses the membrane as a helical span at residues 69 to 89 (VLGFIIFLILILAFVEVPSSF). Topologically, residues 90–111 (TKTADVRYRSQPWQPPCGLTET) are extracellular. The chain crosses the membrane as a helical span at residues 112–132 (IEAFCLLAFLVDLSVKGYLVG). Residues 133–139 (QAQLQQN) are Cytoplasmic-facing. The helical transmembrane segment at 140–160 (LWLLAYFMVLVVSVVDWIVSL) threads the bilayer. Over 161 to 167 (SLACEEP) the chain is Extracellular. Residues 168–188 (LRMRRLLRPFFLLQNSSMMKK) traverse the membrane as a helical segment. The interval 187 to 191 (KKTLK) is interaction with phosphatidylinositol 3,5-bisphosphate. At 189 to 203 (TLKCIRWSLPEMASV) the chain is on the cytoplasmic side. A helical transmembrane segment spans residues 204–224 (GLLLAIHLCLFTIIGMLLFTI). At 225 to 238 (GEKDEAQDQERLAY) the chain is on the extracellular side. The segment at residues 239–263 (FRNLPEALTSLLVLLTTSNNPDVMI) is an intramembrane region (helical; Pore-forming). Topologically, residues 264 to 270 (PAYTQNR) are extracellular. The helical transmembrane segment at 271–291 (AFALFFIVFTLIGSLFLMNLL) threads the bilayer. Residues 292–417 (TAIIYNQFRG…TAQFIFSHHY (126 aa)) are Cytoplasmic-facing. A helical transmembrane segment spans residues 418-438 (FDYLGNLVALGNLLSICVFLV). Residues 439-449 (LDSDLLPGERD) are Extracellular-facing. A helical transmembrane segment spans residues 450-470 (DFVLGILDYIFILYYLLELLF). Residues 471-486 (KVFALGLPGYLSYHSN) are Cytoplasmic-facing. A helical membrane pass occupies residues 487–507 (VFDGLLTIILLVSEICTLAVY). The Extracellular segment spans residues 508–524 (RLPHSGWKPEQYGPLSL). A helical transmembrane segment spans residues 525 to 542 (WDMTRLMNTLIVFRFLRI). The Cytoplasmic segment spans residues 543 to 564 (IPNIKPMAEVANTILGLIPNLR). The helical transmembrane segment at 565 to 585 (AFGGILVVAYYVFAMIGINLF) threads the bilayer. Over 586-618 (RGVIVPPGNSSLVPDNNSAVCGSFEQLGYWPNN) the chain is Extracellular. Residues N594 and N601 are each glycosylated (N-linked (GlcNAc...) asparagine). The helical; Pore-forming intramembrane region spans 619–641 (FDDFAAALITLWNVMVVNNWQVI). At 642 to 656 (LEAYKRYAGPWSMVY) the chain is on the extracellular side. The helical transmembrane segment at 657-677 (FVLWWLVSSVIWINLFLALLL) threads the bilayer. The Cytoplasmic portion of the chain corresponds to 678 to 731 (ENFLHRWDPQGHKQLLVGTKQMSVELMFRDILEEPKEEELMEKLHKHPHLHLCR).

It belongs to the calcium channel alpha-1 subunit (TC 1.A.1.11) family. Two pore calcium channel subfamily. In terms of assembly, homodimer. Interacts with LRRK2. Interacts with HAX1. Interacts with MTOR; the interaction is required for TPCN2 ATP sensitivity. Found in a complex with LSM12, TPCN1 and TPCN2. Interacts with LSM12. Post-translationally, N-glycosylated. As to expression, widely expressed. Highly expressed in macrophages. Expressed in pigmented cells.

It is found in the late endosome membrane. The protein resides in the lysosome membrane. It localises to the melanosome membrane. It carries out the reaction Ca(2+)(in) = Ca(2+)(out). It catalyses the reaction Na(+)(in) = Na(+)(out). With respect to regulation, regulated by Mg(2+) ions, cytosolic Mg(2+) selectively inhibits outward current while lysosomal Mg(2+) modestly inhibits both the outward and inward currents. In the absence of Mg(2+), NAADP readily activates TPCN2, with properties similar to PI(3,5)P2. Na(+) current is inhibited by ATP in a MTORC-dependent manner. ATP sensitivity is independent of PI(3,5)P2. Both current elicited by PI(3,5)P2 as well as NAADP are inhibited by tetrandrine. Intracellular channel initially characterized as a non-selective Ca(2+)-permeable channel activated by NAADP (nicotinic acid adenine dinucleotide phosphate), it is also a highly-selective Na(+) channel activated directly by PI(3,5)P2 (phosphatidylinositol 3,5-bisphosphate). Localizes to the lysosomal and late endosome membranes where it regulates organellar membrane excitability, membrane trafficking, and pH homeostasis. Is associated with a plethora of physiological processes, including mTOR-dependent nutrient sensing, skin pigmentation and autophagy. Ion selectivity is not fixed but rather agonist-dependent and under defined ionic conditions, can be readily activated by both NAADP and PI(3,5)P2. As calcium channel, it increases the pH in the lysosomal lumen, as sodium channel, it promotes lysosomal exocytosis. Plays a crucial role in endolysosomal trafficking in the endolysosomal degradation pathway and is potentially involved in the homeostatic control of many macromolecules and cell metabolites. Also expressed in melanosomes of pigmented cells where mediates a Ca(2+) channel and/or PI(3,5)P2-activated melanosomal Na(+) channel to acidify pH and inhibit tyrosinase activity required for melanogenesis and pigmentation. Unlike the voltage-dependent TPCN1, TPCN2 is voltage independent and can be activated solely by PI(3,5)P2 binding. In contrast, PI(4,5)P2, PI(3,4)P2, PI(3)P and PI(5)P have no obvious effect on channel activation. Its function is as follows. (Microbial infection) During Ebola virus (EBOV) infection, controls the movement of endosomes containing virus particles and is required by EBOV to escape from the endosomal network into the cell cytoplasm. In Mus musculus (Mouse), this protein is Two pore channel protein 2.